A 131-amino-acid polypeptide reads, in one-letter code: Profilin-2 (131 aa).

Belongs to the profilin family. In terms of assembly, occurs in many kinds of cells as a complex with monomeric actin in a 1:1 ratio. In terms of tissue distribution, expressed in vascular bundles of roots, hypocotyls, cotyledons, leaves, sepals, petals, stamen filaments and stalks of developing seeds. Expressed in leaf epidermal cells, trichomes and stem epidermal cells. Detected in phloem exudates (at protein level).

The protein localises to the cytoplasm. It is found in the cytoskeleton. It localises to the endoplasmic reticulum. Its subcellular location is the cytosol. The protein resides in the nucleus. Binds to actin monomers and regulates the organization of the actin cytoskeleton. At high concentrations, profilin prevents the polymerization of actin, whereas it enhances it at low concentrations. At low concentrations, associates with the poly-proline motif of formins to enhance actin filament elongation rate. Binds G-actin and poly-L-proline with low affinity in vitro. Binds ACT1, ACT7 and ACT11 and inhibits actin polymerization. May be involved in the cross-talk between vesicular trafficking and the actin cytoskeleton. Inhibits cell growth of various pathogenic fungal strains. May play a role as antifungal proteins in the defense system against fungal pathogen attacks. This is Profilin-2 from Arabidopsis thaliana (Mouse-ear cress).